We begin with the raw amino-acid sequence, 182 residues long: dCTP deaminase, dUMP-forming (182 aa).

Residues 96–101 (RSSIGR), D113, 121–123 (TLE), Q142, Y156, and Q163 contribute to the dCTP site. The active-site Proton donor/acceptor is E123.

The protein belongs to the dCTP deaminase family. Homotrimer.

The enzyme catalyses dCTP + 2 H2O = dUMP + NH4(+) + diphosphate. It participates in pyrimidine metabolism; dUMP biosynthesis; dUMP from dCTP: step 1/1. Functionally, bifunctional enzyme that catalyzes both the deamination of dCTP to dUTP and the hydrolysis of dUTP to dUMP without releasing the toxic dUTP intermediate. In Halothermothrix orenii (strain H 168 / OCM 544 / DSM 9562), this protein is dCTP deaminase, dUMP-forming.